The following is a 163-amino-acid chain: Nucleotide-binding protein HDEF_1968 (163 aa).

This sequence belongs to the YajQ family.

Its function is as follows. Nucleotide-binding protein. This chain is Nucleotide-binding protein HDEF_1968, found in Hamiltonella defensa subsp. Acyrthosiphon pisum (strain 5AT).